Consider the following 707-residue polypeptide: Methionine--tRNA ligase (707 aa).

A 'HIGH' region motif is present at residues 13 to 23 (PYANGNFHIGH). Zn(2+) is bound by residues Cys-147, Cys-150, Cys-160, and Cys-163. Residues 344–348 (KMSKS) carry the 'KMSKS' region motif. Position 347 (Lys-347) interacts with ATP. The 107-residue stretch at 601-707 (DFAKVDLRIA…PGATPGMRIH (107 aa)) folds into the tRNA-binding domain.

It belongs to the class-I aminoacyl-tRNA synthetase family. MetG type 1 subfamily. Homodimer. It depends on Zn(2+) as a cofactor.

Its subcellular location is the cytoplasm. The catalysed reaction is tRNA(Met) + L-methionine + ATP = L-methionyl-tRNA(Met) + AMP + diphosphate. In terms of biological role, is required not only for elongation of protein synthesis but also for the initiation of all mRNA translation through initiator tRNA(fMet) aminoacylation. The sequence is that of Methionine--tRNA ligase from Polaromonas naphthalenivorans (strain CJ2).